The chain runs to 161 residues: Putative 4-hydroxy-4-methyl-2-oxoglutarate aldolase (161 aa).

Substrate is bound by residues 75-78 (GDML) and R97. D98 provides a ligand contact to a divalent metal cation.

The protein belongs to the class II aldolase/RraA-like family. As to quaternary structure, homotrimer. The cofactor is a divalent metal cation.

The catalysed reaction is 4-hydroxy-4-methyl-2-oxoglutarate = 2 pyruvate. The enzyme catalyses oxaloacetate + H(+) = pyruvate + CO2. In terms of biological role, catalyzes the aldol cleavage of 4-hydroxy-4-methyl-2-oxoglutarate (HMG) into 2 molecules of pyruvate. Also contains a secondary oxaloacetate (OAA) decarboxylase activity due to the common pyruvate enolate transition state formed following C-C bond cleavage in the retro-aldol and decarboxylation reactions. The polypeptide is Putative 4-hydroxy-4-methyl-2-oxoglutarate aldolase (Marinomonas sp. (strain MWYL1)).